Consider the following 101-residue polypeptide: Aspartyl/glutamyl-tRNA(Asn/Gln) amidotransferase subunit C (101 aa).

Belongs to the GatC family. As to quaternary structure, heterotrimer of A, B and C subunits.

It catalyses the reaction L-glutamyl-tRNA(Gln) + L-glutamine + ATP + H2O = L-glutaminyl-tRNA(Gln) + L-glutamate + ADP + phosphate + H(+). The enzyme catalyses L-aspartyl-tRNA(Asn) + L-glutamine + ATP + H2O = L-asparaginyl-tRNA(Asn) + L-glutamate + ADP + phosphate + 2 H(+). Functionally, allows the formation of correctly charged Asn-tRNA(Asn) or Gln-tRNA(Gln) through the transamidation of misacylated Asp-tRNA(Asn) or Glu-tRNA(Gln) in organisms which lack either or both of asparaginyl-tRNA or glutaminyl-tRNA synthetases. The reaction takes place in the presence of glutamine and ATP through an activated phospho-Asp-tRNA(Asn) or phospho-Glu-tRNA(Gln). This Salinispora tropica (strain ATCC BAA-916 / DSM 44818 / JCM 13857 / NBRC 105044 / CNB-440) protein is Aspartyl/glutamyl-tRNA(Asn/Gln) amidotransferase subunit C.